A 281-amino-acid polypeptide reads, in one-letter code: Pantothenate synthetase (281 aa).

30–37 (MGNLHQGH) serves as a coordination point for ATP. His37 serves as the catalytic Proton donor. A (R)-pantoate-binding site is contributed by Gln61. Gln61 is a binding site for beta-alanine. Residue 149–152 (GRKD) participates in ATP binding. A (R)-pantoate-binding site is contributed by Gln155. ATP is bound by residues Ile178 and 186-189 (MSSR).

It belongs to the pantothenate synthetase family. As to quaternary structure, homodimer.

The protein localises to the cytoplasm. It catalyses the reaction (R)-pantoate + beta-alanine + ATP = (R)-pantothenate + AMP + diphosphate + H(+). Its pathway is cofactor biosynthesis; (R)-pantothenate biosynthesis; (R)-pantothenate from (R)-pantoate and beta-alanine: step 1/1. Functionally, catalyzes the condensation of pantoate with beta-alanine in an ATP-dependent reaction via a pantoyl-adenylate intermediate. This Shewanella denitrificans (strain OS217 / ATCC BAA-1090 / DSM 15013) protein is Pantothenate synthetase.